The sequence spans 129 residues: Large ribosomal subunit protein bL20 (129 aa).

It belongs to the bacterial ribosomal protein bL20 family.

Functionally, binds directly to 23S ribosomal RNA and is necessary for the in vitro assembly process of the 50S ribosomal subunit. It is not involved in the protein synthesizing functions of that subunit. The sequence is that of Large ribosomal subunit protein bL20 from Mycobacterium sp. (strain JLS).